The following is a 341-amino-acid chain: DnaJ homolog subfamily C member 22 (341 aa).

The 47-residue stretch at 4–50 folds into the TM2 domain; it reads GLLMTYALWAFGGPVGLHHLYLGRDSHALLWMLTLGGGGLGWLWEFW. 7 helical membrane passes run 5–25, 30–50, 81–101, 105–125, 135–155, 185–205, and 232–252; these read LLMT…HLYL, HALL…WEFW, FASQ…SLSS, FYIV…AAVG, LGAA…ILPI, VGLA…YNTA, and VESV…APGF. The J domain maps to 277–341; it reads LAHQVLGIPE…QPKKPRASWR (65 aa).

It is found in the membrane. Its function is as follows. May function as a co-chaperone. The sequence is that of DnaJ homolog subfamily C member 22 (Dnajc22) from Rattus norvegicus (Rat).